A 312-amino-acid chain; its full sequence is Ribosomal protein L11 methyltransferase (312 aa).

Thr-163, Gly-184, Asp-206, and Asn-248 together coordinate S-adenosyl-L-methionine.

The protein belongs to the methyltransferase superfamily. PrmA family.

The protein localises to the cytoplasm. The catalysed reaction is L-lysyl-[protein] + 3 S-adenosyl-L-methionine = N(6),N(6),N(6)-trimethyl-L-lysyl-[protein] + 3 S-adenosyl-L-homocysteine + 3 H(+). In terms of biological role, methylates ribosomal protein L11. This is Ribosomal protein L11 methyltransferase from Clostridium botulinum (strain 657 / Type Ba4).